The chain runs to 31 residues: Cytochrome b6-f complex subunit 6 (31 aa).

Residues isoleucine 4–serine 26 form a helical membrane-spanning segment.

The protein belongs to the PetL family. In terms of assembly, the 4 large subunits of the cytochrome b6-f complex are cytochrome b6, subunit IV (17 kDa polypeptide, PetD), cytochrome f and the Rieske protein, while the 4 small subunits are PetG, PetL, PetM and PetN. The complex functions as a dimer.

It localises to the plastid. It is found in the chloroplast thylakoid membrane. Component of the cytochrome b6-f complex, which mediates electron transfer between photosystem II (PSII) and photosystem I (PSI), cyclic electron flow around PSI, and state transitions. PetL is important for photoautotrophic growth as well as for electron transfer efficiency and stability of the cytochrome b6-f complex. In Illicium oligandrum (Star anise), this protein is Cytochrome b6-f complex subunit 6.